Here is a 430-residue protein sequence, read N- to C-terminus: tRNA(Ile)-lysidine synthase (430 aa).

Position 21 to 26 (21 to 26 (SGGLDS)) interacts with ATP.

This sequence belongs to the tRNA(Ile)-lysidine synthase family.

Its subcellular location is the cytoplasm. The catalysed reaction is cytidine(34) in tRNA(Ile2) + L-lysine + ATP = lysidine(34) in tRNA(Ile2) + AMP + diphosphate + H(+). Ligates lysine onto the cytidine present at position 34 of the AUA codon-specific tRNA(Ile) that contains the anticodon CAU, in an ATP-dependent manner. Cytidine is converted to lysidine, thus changing the amino acid specificity of the tRNA from methionine to isoleucine. This chain is tRNA(Ile)-lysidine synthase, found in Salmonella agona (strain SL483).